A 101-amino-acid polypeptide reads, in one-letter code: Small ribosomal subunit protein bS18c (101 aa).

Basic residues predominate over residues 1 to 19 (MNKSKRPFTKSKRSFRRRL). Residues 1-23 (MNKSKRPFTKSKRSFRRRLPPIQ) form a disordered region.

The protein belongs to the bacterial ribosomal protein bS18 family. Part of the 30S ribosomal subunit.

It is found in the plastid. It localises to the chloroplast. In Draba nemorosa (Woodland whitlowgrass), this protein is Small ribosomal subunit protein bS18c.